A 775-amino-acid chain; its full sequence is MATTQASEAATEKGLPLGMDVSMVDEYASQSKLLQEFVKIPTIGNAWIFNSKTENTSRAIVSVGQTDLLANKKRSFLLNSHISKNSSNSVDFQWSPFPIEMSGVSAVIPSPSGRKLLLIRNSEDDSPTKLEVWGPCQLENEIHIAQSVHGSLYVDEWFEGISWNQEETLVAYVAEEPPQPKPEFNDSGYKKAGSSEKDCKSWKGKGDWEETWGETYSKKRIPALFVVNISSGEVRAVKGIPRTLSVGQVIWAPSSSHSLVFVAWSSDNGYQKTPRKLGIKYCFNRPCALYAVPDPFMEEADKPSLNVSKGETAPTTKLTSELSSAFFPRFSPDGKYLVFISAKSAIDSGTHNATNSMHKIDWPADGKLEGLSVADVVPIVMCPQDGCFPGLYCSGILRNPWLTDGQTMILSSIWGSKEVILSVNVVSREVSRVSPQDSDYSWNVLALDKDNILAVSSSLITVPQIYYGSEVCQTGKPNQWEWQEIATPFPSPSDKISAILADHKFSILKIPISNSSNKLADGAKLPFEAIFVSWKDSATRPTIVVLHGGPHTVYPSSYSKSLAFLYSQGYNLLVVNYRGSLGFGEEALQSLPGNIGSQDVNDVLTALDFVIKKGLIDASKVAVVGGSHGGFLTTHLIGQAPGTFVAAAARNPVCNLSLMVGTTDIPEWCFVEIYGKEGKNCFSEYPSFDDLCQFHQKSPISHISKVSTPTLFLLGAQDLRVPVSNGLQYARTLKEMGVETKIIVFPEDMHGLDKPQSDFESFLNIGVWFKKHMSK.

Active-site charge relay system residues include S627, D718, and H750.

The protein belongs to the peptidase S9C family. In terms of assembly, homotetramer.

The protein localises to the cytoplasm. It catalyses the reaction Cleavage of an N-acetyl or N-formyl amino acid from the N-terminus of a polypeptide.. In terms of biological role, catalyzes the hydrolysis of the N-terminal peptide bond of an N-acetylated peptide to generate an N-acetylated amino acid and a peptide with a free N-terminus. This is Acylamino-acid-releasing enzyme 1 from Oryza sativa subsp. japonica (Rice).